A 216-amino-acid polypeptide reads, in one-letter code: Trimethylamine corrinoid protein 1 (216 aa).

The region spanning 1 to 92 is the B12-binding N-terminal domain; it reads MANKEEIIAK…EMEKRKSQTK (92 aa). The B12-binding domain maps to 94-216; it reads LGTIVIGTIE…VVSKVKAALL (123 aa). Residue His107 participates in methylcob(III)alamin binding.

It belongs to the methylamine corrinoid protein family. Can form a complex with MttB.

The protein operates within one-carbon metabolism; methanogenesis from trimethylamine. Functionally, acts probably as a methyl group carrier between MttB and either MtbA or MtaA. The polypeptide is Trimethylamine corrinoid protein 1 (mttC1) (Methanosarcina mazei (strain ATCC BAA-159 / DSM 3647 / Goe1 / Go1 / JCM 11833 / OCM 88) (Methanosarcina frisia)).